Reading from the N-terminus, the 502-residue chain is Cytochrome P450 71B19 (502 aa).

The helical transmembrane segment at 1-21 (MAISFLCVFLITFVSLIFFAK) threads the bilayer. Cys444 contacts heme.

This sequence belongs to the cytochrome P450 family. Heme is required as a cofactor.

Its subcellular location is the membrane. The chain is Cytochrome P450 71B19 (CYP71B19) from Arabidopsis thaliana (Mouse-ear cress).